A 118-amino-acid polypeptide reads, in one-letter code: MSRSLALVYLSLLCLQTHLSISVTVPIPSVNGEIDAMLNRNGVIGEEEGEEMMPSEISRRVMMMRKQYISYETLRRDMVPCQKPGASYYACRSGQANAYNRGCSVITRCARDTNDIKT.

The first 22 residues, 1 to 22 (MSRSLALVYLSLLCLQTHLSIS), serve as a signal peptide directing secretion. Residues 23–63 (VTVPIPSVNGEIDAMLNRNGVIGEEEGEEMMPSEISRRVMM) constitute a propeptide, removed in mature form. Intrachain disulfides connect C81–C91 and C103–C109.

This sequence belongs to the plant rapid alkalinization factor (RALF) family. In terms of processing, proteolytically cleaved, probably by S1P, a subtilisin-like serine protease (subtilase).

It is found in the secreted. Functionally, cell signaling peptide that may regulate plant stress, growth, and development. Mediates a rapid alkalinization of extracellular space by mediating a transient increase in the cytoplasmic Ca(2+) concentration leading to a calcium-dependent signaling events through a cell surface receptor and a concomitant activation of some intracellular mitogen-activated protein kinases. This Arabidopsis thaliana (Mouse-ear cress) protein is Protein RALF-like 24 (RALFL24).